A 104-amino-acid polypeptide reads, in one-letter code: Nucleoid-associated protein PEPE_1483 (104 aa).

Residues 1 to 35 (MRGGMGNMQSMMRQMQKMQKKVTEEQEKLNQTEFT) are disordered. Positions 8 to 17 (MQSMMRQMQK) are enriched in low complexity. Positions 21–30 (KVTEEQEKLN) are enriched in basic and acidic residues.

Belongs to the YbaB/EbfC family. As to quaternary structure, homodimer.

It localises to the cytoplasm. Its subcellular location is the nucleoid. Binds to DNA and alters its conformation. May be involved in regulation of gene expression, nucleoid organization and DNA protection. The chain is Nucleoid-associated protein PEPE_1483 from Pediococcus pentosaceus (strain ATCC 25745 / CCUG 21536 / LMG 10740 / 183-1w).